Here is a 244-residue protein sequence, read N- to C-terminus: MVAFLFCNLLLVACGSVTWTMSDTGESGVDLADRLDLVEKIGDTHSKDLEIWMELGKQREADAREMHAVCRVQPSAMLPPDQPQITGLVLFRQLGPSSRLEASFNLEGFPAEQNTSNHAIHVHEFGDLSQGCESTGPHYNPLGVPHPQHPGDFGNFVVRDGRLWKHRMGLATSLAGPHSILGRAVVVHAGEDDLGKGGNQASVQNGNAGRRLACCVVGTSNSEAWESQTKERKKRRRESECKTT.

The N-terminal stretch at 1-15 (MVAFLFCNLLLVACG) is a signal peptide. 2 disulfide bridges follow: C70–C215 and C132–C214. A glycan (N-linked (GlcNAc...) asparagine) is linked at N114. The Cu cation site is built by H121, H123, and H138. The Zn(2+) site is built by H138, H146, H149, and D152. Residue H188 coordinates Cu cation. The interval 224 to 244 (AWESQTKERKKRRRESECKTT) is disordered.

Belongs to the Cu-Zn superoxide dismutase family. Homodimer. Interacts with ATP7A; this interaction is copper-dependent and is required for SOD3 activity. It depends on Cu cation as a cofactor. Requires Zn(2+) as cofactor.

It is found in the secreted. Its subcellular location is the extracellular space. The protein localises to the golgi apparatus. It localises to the trans-Golgi network. It catalyses the reaction 2 superoxide + 2 H(+) = H2O2 + O2. In terms of biological role, protect the extracellular space from toxic effect of reactive oxygen intermediates by converting superoxide radicals into hydrogen peroxide and oxygen. In Rattus norvegicus (Rat), this protein is Extracellular superoxide dismutase [Cu-Zn] (Sod3).